The chain runs to 1409 residues: DNA-directed RNA polymerase subunit beta' (1409 aa).

Positions 70, 72, 85, and 88 each coordinate Zn(2+). Asp-458, Asp-460, and Asp-462 together coordinate Mg(2+). The Zn(2+) site is built by Cys-813, Cys-887, Cys-894, and Cys-897.

The protein belongs to the RNA polymerase beta' chain family. As to quaternary structure, the RNAP catalytic core consists of 2 alpha, 1 beta, 1 beta' and 1 omega subunit. When a sigma factor is associated with the core the holoenzyme is formed, which can initiate transcription. It depends on Mg(2+) as a cofactor. Zn(2+) serves as cofactor.

The catalysed reaction is RNA(n) + a ribonucleoside 5'-triphosphate = RNA(n+1) + diphosphate. In terms of biological role, DNA-dependent RNA polymerase catalyzes the transcription of DNA into RNA using the four ribonucleoside triphosphates as substrates. In Acidovorax ebreus (strain TPSY) (Diaphorobacter sp. (strain TPSY)), this protein is DNA-directed RNA polymerase subunit beta'.